Here is an 846-residue protein sequence, read N- to C-terminus: Envelope glycoprotein gp160 (846 aa).

Positions 1–31 (MRAREKERNCQNLWKWGIMLLGMLMTCSAAE) are cleaved as a signal peptide. At 32–674 (DLWVTVYYGV…ITKWLWYIKL (643 aa)) the chain is on the extracellular side. C53 and C73 form a disulfide bridge. N87, N129, N151, N179, N182, N229, N236, N257, N271, N284, and N290 each carry an N-linked (GlcNAc...) asparagine; by host glycan. 5 cysteine pairs are disulfide-bonded: C118–C200, C125–C191, C130–C152, C213–C242, and C223–C234. Residues 130-151 (CTDELRNSKGNGKVEEEEKRKN) form a V1 region. Residues 152-191 (CSFNVRDKREQVYALFYKLDIVPIDNNNRTNSTNYRLINC) are V2. The V3 stretch occupies residues 291–327 (CTRPYKYTRQRTSIGLRQSLYTITGKKKKTGYIGQAH). C291 and C328 are disulfide-bonded. An N-linked (GlcNAc...) asparagine; by host glycan is attached at N351. The CD4-binding loop stretch occupies residues 360–370 (SSGGDPEITSH). 2 disulfide bridges follow: C374–C435 and C381–C408. Residues 381–408 (CNTSRLFNSTWNQTNSTGFNNGTVTLPC) form a V4 region. N-linked (GlcNAc...) asparagine; by host glycosylation is found at N382, N388, N392, N395, N401, N438, N451, and N452. V5 stretches follow at residues 450-461 (ANNSSHETIRPG) and 453-461 (SSHETIRPG). The tract at residues 502–522 (AIGLGAVFLGFLGAAGSTMGA) is fusion peptide. Positions 564–582 (KQLQARVLAVERYLRDQQL) are immunosuppression. A disulfide bridge links C588 with C594. Residues N601, N606, N615, and N627 are each glycosylated (N-linked (GlcNAc...) asparagine; by host). A coiled-coil region spans residues 623–657 (REIDNYTGLIYSLIEESQIQQEKNEKELLELDKWA). The MPER; binding to GalCer stretch occupies residues 652-673 (ELDKWASLWNWFSITKWLWYIK). A helical transmembrane segment spans residues 675–695 (FIMIVGGLIGLRIVFAVLSVV). The Cytoplasmic segment spans residues 696–846 (NRVRQGYSPL…IRQGLERLLL (151 aa)). The short motif at 702 to 705 (YSPL) is the YXXL motif; contains endocytosis signal element. Residues C754 and C827 are each lipidated (S-palmitoyl cysteine; by host). The Di-leucine internalization motif signature appears at 845–846 (LL).

The protein belongs to the HIV-1 env protein family. In terms of assembly, the mature envelope protein (Env) consists of a homotrimer of non-covalently associated gp120-gp41 heterodimers. The resulting complex protrudes from the virus surface as a spike. There seems to be as few as 10 spikes on the average virion. Interacts with host CD4, CCR5 and CXCR4. Gp120 also interacts with the C-type lectins CD209/DC-SIGN and CLEC4M/DC-SIGNR (collectively referred to as DC-SIGN(R)). Gp120 and gp41 interact with GalCer. Gp120 interacts with host ITGA4/ITGB7 complex; on CD4+ T-cells, this interaction results in rapid activation of integrin ITGAL/LFA-1, which facilitates efficient cell-to-cell spreading of HIV-1. Gp120 interacts with cell-associated heparan sulfate; this interaction increases virus infectivity on permissive cells and may be involved in infection of CD4- cells. The mature envelope protein (Env) consists of a homotrimer of non-covalently associated gp120-gp41 heterodimers. The resulting complex protrudes from the virus surface as a spike. There seems to be as few as 10 spikes on the average virion. Post-translationally, highly glycosylated by host. The high number of glycan on the protein is reffered to as 'glycan shield' because it contributes to hide protein sequence from adaptive immune system. Palmitoylation of the transmembrane protein and of Env polyprotein (prior to its proteolytic cleavage) is essential for their association with host cell membrane lipid rafts. Palmitoylation is therefore required for envelope trafficking to classical lipid rafts, but not for viral replication. In terms of processing, specific enzymatic cleavages in vivo yield mature proteins. Envelope glycoproteins are synthesized as an inactive precursor that is heavily N-glycosylated and processed likely by host cell furin in the Golgi to yield the mature SU and TM proteins. The cleavage site between SU and TM requires the minimal sequence [KR]-X-[KR]-R. About 2 of the 9 disulfide bonds of gp41 are reduced by P4HB/PDI, following binding to CD4 receptor.

Its subcellular location is the virion membrane. The protein resides in the host cell membrane. It is found in the host endosome membrane. In terms of biological role, oligomerizes in the host endoplasmic reticulum into predominantly trimers. In a second time, gp160 transits in the host Golgi, where glycosylation is completed. The precursor is then proteolytically cleaved in the trans-Golgi and thereby activated by cellular furin or furin-like proteases to produce gp120 and gp41. Functionally, attaches the virus to the host lymphoid cell by binding to the primary receptor CD4. This interaction induces a structural rearrangement creating a high affinity binding site for a chemokine coreceptor like CXCR4 and/or CCR5. Acts as a ligand for CD209/DC-SIGN and CLEC4M/DC-SIGNR, which are respectively found on dendritic cells (DCs), and on endothelial cells of liver sinusoids and lymph node sinuses. These interactions allow capture of viral particles at mucosal surfaces by these cells and subsequent transmission to permissive cells. HIV subverts the migration properties of dendritic cells to gain access to CD4+ T-cells in lymph nodes. Virus transmission to permissive T-cells occurs either in trans (without DCs infection, through viral capture and transmission), or in cis (following DCs productive infection, through the usual CD4-gp120 interaction), thereby inducing a robust infection. In trans infection, bound virions remain infectious over days and it is proposed that they are not degraded, but protected in non-lysosomal acidic organelles within the DCs close to the cell membrane thus contributing to the viral infectious potential during DCs' migration from the periphery to the lymphoid tissues. On arrival at lymphoid tissues, intact virions recycle back to DCs' cell surface allowing virus transmission to CD4+ T-cells. Its function is as follows. Acts as a class I viral fusion protein. Under the current model, the protein has at least 3 conformational states: pre-fusion native state, pre-hairpin intermediate state, and post-fusion hairpin state. During fusion of viral and target intracellular membranes, the coiled coil regions (heptad repeats) assume a trimer-of-hairpins structure, positioning the fusion peptide in close proximity to the C-terminal region of the ectodomain. The formation of this structure appears to drive apposition and subsequent fusion of viral and target cell membranes. Complete fusion occurs in host cell endosomes and is dynamin-dependent, however some lipid transfer might occur at the plasma membrane. The virus undergoes clathrin-dependent internalization long before endosomal fusion, thus minimizing the surface exposure of conserved viral epitopes during fusion and reducing the efficacy of inhibitors targeting these epitopes. Membranes fusion leads to delivery of the nucleocapsid into the cytoplasm. This chain is Envelope glycoprotein gp160, found in Human immunodeficiency virus type 1 group M subtype D (isolate NDK) (HIV-1).